The following is a 956-amino-acid chain: MAM domain-containing glycosylphosphatidylinositol anchor protein 2 (956 aa).

An N-terminal signal peptide occupies residues 1–25 (MDLLYGLVWLLTVLLEGISGQGVYA). 2 consecutive Ig-like domains span residues 27–127 (PTVR…IRVD) and 134–232 (PVVT…KMVS). 2 cysteine pairs are disulfide-bonded: Cys-62-Cys-110 and Cys-159-Cys-216. 3 N-linked (GlcNAc...) asparagine glycosylation sites follow: Asn-92, Asn-213, and Asn-237. 4 consecutive Ig-like domains span residues 242-328 (PSIK…NIIV), 340-436 (PDPY…VNIS), 442-533 (PNLT…ALVQ), and 540-627 (PAVE…FLVT). 2 cysteine pairs are disulfide-bonded: Cys-264–Cys-310 and Cys-359–Cys-417. Asn-434, Asn-443, Asn-504, Asn-610, and Asn-703 each carry an N-linked (GlcNAc...) asparagine glycan. Cystine bridges form between Cys-465-Cys-515 and Cys-561-Cys-611. A Fibronectin type-III domain is found at 638–739 (DTYNPVWQNR…IRVIKYSAPV (102 aa)). One can recognise an MAM domain in the interval 746–921 (FHCGFEDGNI…VSIAEGECAK (176 aa)). The GPI-anchor amidated aspartate moiety is linked to residue Asp-931. The propeptide at 932–956 (GAVGILVHIWLFPIIVLISILSPRR) is removed in mature form.

In terms of assembly, interacts (through the Ig-like domains) with NLGN2. Detected in Leydig cells, syncytiotrophoblast, duodenal villi epithelial cells and neutrophils from kidney and cutaneous squamous cell carcinoma (at protein level).

The protein resides in the cell membrane. Functionally, may be involved in cell-cell interactions. This chain is MAM domain-containing glycosylphosphatidylinositol anchor protein 2 (MDGA2), found in Homo sapiens (Human).